A 417-amino-acid polypeptide reads, in one-letter code: Zinc finger protein CONSTANS-LIKE 16 (417 aa).

Zn(2+) contacts are provided by C17, C20, C40, and H45. The segment at 17 to 59 adopts a B box-type; atypical zinc-finger fold; that stretch reads CDSCVKRRARWYCAADDAFLCQSCDSLVHSANPLARRHERVRL. The tract at residues 63 to 105 is disordered; the sequence is SPAVVKHSNHSSASPPHEVATWHHGFTRKARTPRGSGKKNNSS. Positions 212–239 form a coiled coil; the sequence is LSNSEMFKIEKDEIEEEVEEIKAMSMDI. The 43-residue stretch at 361–403 folds into the CCT domain; that stretch reads REARVSRYREKRRTRLFSKKIRYEVRKLNAEKRPRMKGRFVKR.

Belongs to the CONSTANS family.

The protein resides in the nucleus. In Arabidopsis thaliana (Mouse-ear cress), this protein is Zinc finger protein CONSTANS-LIKE 16 (COL16).